Here is a 562-residue protein sequence, read N- to C-terminus: MIFSSRRRIRGRWGRSGPMMRGMGALTRVVGVVWRRSLQLRVVALTFGLSLAVILALGFVLTSQLTSRVLDVKVRVAIEQIERARTTVTGIVNGEETRSLDSSLQLARNTLTSKTDPTSGAGLVGAFDAVLIVPGDGPRTATTAGPVDQVPNSLRGFIKAGQAAYQYATVHTEGFSGPALIIGTPTSSQVTNLELYLIFPLKNEQATVTLVRGTMATGGMVLLVLLSGIALLVSRQVVVPVRSASRIAERFAEGHLSERMPVRGEDDMARLAVSFNDMAESLSRQITQLEEFGNLQRRFTSDVSHELRTPLTTVRMAADLIYDHSSDLDPTLRRSTELMVSELDRFETLLNDLLEISRHDAGVAELSVEAVDLRVMVNNALGNVGHLAEEAGIELLVDMPVDEVIAEVDARRVERILRNLIANAIDHSEHKPVRIRMAADEDTVAVTVRDYGIGLRPGEEKLVFSRFWRSDPSRVRRSGGTGLGLAISIEDARLHQGRLEAWGEPGQGACFRLTLPLVRGHKVTTSPLPMKPILQPSPQASTAGQQHGTQRQRLREHAERSR.

A run of 2 helical transmembrane segments spans residues 42-62 and 213-233; these read VVAL…FVLT and GTMA…ALLV. The HAMP domain occupies 235–287; that stretch reads RQVVVPVRSASRIAERFAEGHLSERMPVRGEDDMARLAVSFNDMAESLSRQIT. The 218-residue stretch at 302–519 folds into the Histidine kinase domain; the sequence is DVSHELRTPL…CFRLTLPLVR (218 aa). Residues 526 to 562 are disordered; the sequence is SPLPMKPILQPSPQASTAGQQHGTQRQRLREHAERSR. Positions 536-551 are enriched in polar residues; that stretch reads PSPQASTAGQQHGTQR. Residues 553–562 are compositionally biased toward basic and acidic residues; that stretch reads RLREHAERSR.

The protein resides in the cell membrane. The catalysed reaction is ATP + protein L-histidine = ADP + protein N-phospho-L-histidine.. In terms of biological role, member of the two-component regulatory system MtrA/MtrB. Seems to function as a membrane-associated protein kinase that phosphorylates MtrA in response to environmental signals. This is Sensor histidine kinase MtrB (mtrB) from Mycobacterium leprae (strain TN).